We begin with the raw amino-acid sequence, 123 residues long: Galectin-2 (123 aa).

Residues 4 to 123 (KVEIMNMDMK…LRYLSVQGGF (120 aa)) form the Galectin domain. Residue 65-71 (WGKEQRD) coordinates a beta-D-galactoside.

In terms of assembly, homodimer.

In terms of biological role, this protein binds beta-galactoside. Its physiological function is not yet known. The protein is Galectin-2 (LGALS2) of Sus scrofa (Pig).